The following is a 543-amino-acid chain: MAKEIKFSENARHSLLKGVDKLADTVKTTLGPKGRNVVLEKSYGAPDITNDGVTIAKSIELENHFENMGAKLVSEAAQKTNDIAGDGTTTATVLTQAIVREGMKNVTAGANPVGIRRGIETATKAAVDELHKISHKVSTKDEIAQVASVSSASTEVGNLIADAMEKVGHDGVITIEESKGIDTELSVVEGMQFDRGYLSQYMVTDNDKMEADLDNPYILITDKKISNIQDILPLLQEIVQQGKSLLIIADDVDGEALPTLVLNKIRGTFNVVAVKAPGFGDRRKAMLEDIAILTGGTVISSDLGLELKDTKIDQLGKAGKVTVTKDSTTIVEGAGSKEAIAERVDQIKKQIADTTSDFDREKLQERLAKLAGGVAVIKVGAATETELKERKYRIEDALNATRAAVEEGYVAGGGTALVDVMKSIQGTVKGDSEDAETGVKIVMKALGAPVRQIAENAGKDGAVILDHLEHEDPEVGYNAATNKWENMVKAGIIDPTKVTRSALQNAASIAALLLTTEAVVADAPEDDKNQAPAAPNPGMGMGM.

Residues 29–32, 86–90, glycine 413, 478–480, and aspartate 494 contribute to the ATP site; these read TLGP, DGTTT, and NAA.

The protein belongs to the chaperonin (HSP60) family. Forms a cylinder of 14 subunits composed of two heptameric rings stacked back-to-back. Interacts with the co-chaperonin GroES.

It localises to the cytoplasm. The catalysed reaction is ATP + H2O + a folded polypeptide = ADP + phosphate + an unfolded polypeptide.. Functionally, together with its co-chaperonin GroES, plays an essential role in assisting protein folding. The GroEL-GroES system forms a nano-cage that allows encapsulation of the non-native substrate proteins and provides a physical environment optimized to promote and accelerate protein folding. The polypeptide is Chaperonin GroEL (Lactobacillus johnsonii (strain CNCM I-12250 / La1 / NCC 533)).